Consider the following 603-residue polypeptide: Elongation factor 4 (603 aa).

The 183-residue stretch at V7–P189 folds into the tr-type G domain. GTP is bound by residues D19 to T24 and N136 to D139.

The protein belongs to the TRAFAC class translation factor GTPase superfamily. Classic translation factor GTPase family. LepA subfamily.

It localises to the cell inner membrane. The catalysed reaction is GTP + H2O = GDP + phosphate + H(+). Its function is as follows. Required for accurate and efficient protein synthesis under certain stress conditions. May act as a fidelity factor of the translation reaction, by catalyzing a one-codon backward translocation of tRNAs on improperly translocated ribosomes. Back-translocation proceeds from a post-translocation (POST) complex to a pre-translocation (PRE) complex, thus giving elongation factor G a second chance to translocate the tRNAs correctly. Binds to ribosomes in a GTP-dependent manner. This Nostoc sp. (strain PCC 7120 / SAG 25.82 / UTEX 2576) protein is Elongation factor 4.